The primary structure comprises 654 residues: DNA ligase (654 aa).

Residues 31 to 35 (DSEYD), 80 to 81 (SL), and Glu109 contribute to the NAD(+) site. Lys111 (N6-AMP-lysine intermediate) is an active-site residue. NAD(+)-binding residues include Arg132, Glu166, Lys280, and Lys304. Residues Cys398, Cys401, Cys416, and Cys421 each contribute to the Zn(2+) site. The region spanning 579 to 654 (NIEGILSGKT…IWSEQDLLDL (76 aa)) is the BRCT domain.

The protein belongs to the NAD-dependent DNA ligase family. LigA subfamily. It depends on Mg(2+) as a cofactor. The cofactor is Mn(2+).

It catalyses the reaction NAD(+) + (deoxyribonucleotide)n-3'-hydroxyl + 5'-phospho-(deoxyribonucleotide)m = (deoxyribonucleotide)n+m + AMP + beta-nicotinamide D-nucleotide.. DNA ligase that catalyzes the formation of phosphodiester linkages between 5'-phosphoryl and 3'-hydroxyl groups in double-stranded DNA using NAD as a coenzyme and as the energy source for the reaction. It is essential for DNA replication and repair of damaged DNA. This Lactococcus lactis subsp. lactis (strain IL1403) (Streptococcus lactis) protein is DNA ligase.